Consider the following 363-residue polypeptide: Galanin receptor 2a (363 aa).

The Extracellular segment spans residues 1-23 (MNASQQIHVFSSHWKVESVIISL). Residues 24–44 (IFSMIFLVGTVGNCLVLAVLI) form a helical membrane-spanning segment. The Cytoplasmic portion of the chain corresponds to 45–54 (RNGQMNTKST). The chain crosses the membrane as a helical span at residues 55–75 (NLFILNLGLADLCFIVFCVPL). Over 76-94 (QATIYTMDEWVFGAFVCKA) the chain is Extracellular. An intrachain disulfide couples Cys-92 to Cys-169. Residues 95–115 (VHFIIYLTMYASIFTLAAVSL) traverse the membrane as a helical segment. Topologically, residues 116–135 (DRYLAIRYPLRSRETRTPRN) are cytoplasmic. Residues 136 to 156 (ALTSISLVWALSLFFSSPYLS) traverse the membrane as a helical segment. Over 157 to 179 (YYQQMDLDGTTVCIPAWSVHHRQ) the chain is Extracellular. A helical transmembrane segment spans residues 180–200 (AMDICTFIFGYLIPVLILGIT). Residues 201–230 (YARTIRYLWTSVDPMQDMSESRKAKRKVTK) lie on the Cytoplasmic side of the membrane. The chain crosses the membrane as a helical span at residues 231 to 251 (MIIIVAVLFCLCWLPHHLVIL). The Extracellular portion of the chain corresponds to 252–268 (CMWFGHFPLNHTTYVLR). A helical transmembrane segment spans residues 269–289 (ILSHLVAYANSCLNPIVYALV). Over 290–363 (SKHFRKGFKK…TSAFMTFNVT (74 aa)) the chain is Cytoplasmic.

Belongs to the G-protein coupled receptor 1 family. Expressed in neurons in the ventral area of the interpeduncular nucleus (IPN) where expression often overlaps with spx1.

It localises to the membrane. Functionally, receptor for the hormone galanin. Receptor for the hormones spexin-1 and spexin-2. The protein is Galanin receptor 2a of Danio rerio (Zebrafish).